The following is a 361-amino-acid chain: Phospho-N-acetylmuramoyl-pentapeptide-transferase (361 aa).

The next 10 membrane-spanning stretches (helical) occupy residues Ile27–Trp47, Gly70–Trp90, Ser97–Tyr117, Tyr134–Leu154, Thr167–Ser187, Gly199–Ser219, Thr236–Tyr256, Val263–Val283, Leu288–Val308, and Lys338–Leu358.

It belongs to the glycosyltransferase 4 family. MraY subfamily. It depends on Mg(2+) as a cofactor.

It localises to the cell inner membrane. The catalysed reaction is UDP-N-acetyl-alpha-D-muramoyl-L-alanyl-gamma-D-glutamyl-meso-2,6-diaminopimeloyl-D-alanyl-D-alanine + di-trans,octa-cis-undecaprenyl phosphate = di-trans,octa-cis-undecaprenyl diphospho-N-acetyl-alpha-D-muramoyl-L-alanyl-D-glutamyl-meso-2,6-diaminopimeloyl-D-alanyl-D-alanine + UMP. It participates in cell wall biogenesis; peptidoglycan biosynthesis. Functionally, catalyzes the initial step of the lipid cycle reactions in the biosynthesis of the cell wall peptidoglycan: transfers peptidoglycan precursor phospho-MurNAc-pentapeptide from UDP-MurNAc-pentapeptide onto the lipid carrier undecaprenyl phosphate, yielding undecaprenyl-pyrophosphoryl-MurNAc-pentapeptide, known as lipid I. The protein is Phospho-N-acetylmuramoyl-pentapeptide-transferase of Legionella pneumophila subsp. pneumophila (strain Philadelphia 1 / ATCC 33152 / DSM 7513).